Consider the following 446-residue polypeptide: Glucose-6-phosphate isomerase (446 aa).

Catalysis depends on Glu-287, which acts as the Proton donor. Catalysis depends on residues His-308 and Lys-422.

Belongs to the GPI family.

The protein resides in the cytoplasm. The catalysed reaction is alpha-D-glucose 6-phosphate = beta-D-fructose 6-phosphate. It participates in carbohydrate biosynthesis; gluconeogenesis. The protein operates within carbohydrate degradation; glycolysis; D-glyceraldehyde 3-phosphate and glycerone phosphate from D-glucose: step 2/4. Its function is as follows. Catalyzes the reversible isomerization of glucose-6-phosphate to fructose-6-phosphate. The sequence is that of Glucose-6-phosphate isomerase from Lactobacillus helveticus (strain DPC 4571).